A 204-amino-acid polypeptide reads, in one-letter code: N-(5'-phosphoribosyl)anthranilate isomerase (204 aa).

This sequence belongs to the TrpF family.

It carries out the reaction N-(5-phospho-beta-D-ribosyl)anthranilate = 1-(2-carboxyphenylamino)-1-deoxy-D-ribulose 5-phosphate. The protein operates within amino-acid biosynthesis; L-tryptophan biosynthesis; L-tryptophan from chorismate: step 3/5. This is N-(5'-phosphoribosyl)anthranilate isomerase from Bacillus cereus (strain AH820).